An 809-amino-acid chain; its full sequence is Leucine--tRNA ligase (809 aa).

The short motif at 40 to 50 (PYPSGRIHMGH) is the 'HIGH' region element. Residues 579-583 (KMSKS) carry the 'KMSKS' region motif. Position 582 (lysine 582) interacts with ATP.

It belongs to the class-I aminoacyl-tRNA synthetase family.

It localises to the cytoplasm. It carries out the reaction tRNA(Leu) + L-leucine + ATP = L-leucyl-tRNA(Leu) + AMP + diphosphate. This Campylobacter lari (strain RM2100 / D67 / ATCC BAA-1060) protein is Leucine--tRNA ligase.